The chain runs to 185 residues: ATP synthase subunit b 2 (185 aa).

Residues 1 to 23 (MAEGHGDAKGATAHTAADGGHKA) are disordered. Residues 9-18 (KGATAHTAAD) show a composition bias toward low complexity. A helical transmembrane segment spans residues 32–51 (TFASQLVSLTIAFVALYLIV).

It belongs to the ATPase B chain family. As to quaternary structure, F-type ATPases have 2 components, F(1) - the catalytic core - and F(0) - the membrane proton channel. F(1) has five subunits: alpha(3), beta(3), gamma(1), delta(1), epsilon(1). F(0) has three main subunits: a(1), b(2) and c(10-14). The alpha and beta chains form an alternating ring which encloses part of the gamma chain. F(1) is attached to F(0) by a central stalk formed by the gamma and epsilon chains, while a peripheral stalk is formed by the delta and b chains.

It localises to the cell inner membrane. Its function is as follows. F(1)F(0) ATP synthase produces ATP from ADP in the presence of a proton or sodium gradient. F-type ATPases consist of two structural domains, F(1) containing the extramembraneous catalytic core and F(0) containing the membrane proton channel, linked together by a central stalk and a peripheral stalk. During catalysis, ATP synthesis in the catalytic domain of F(1) is coupled via a rotary mechanism of the central stalk subunits to proton translocation. Component of the F(0) channel, it forms part of the peripheral stalk, linking F(1) to F(0). The b'-subunit is a diverged and duplicated form of b found in plants and photosynthetic bacteria. The protein is ATP synthase subunit b 2 (atpF2) of Rhodopseudomonas palustris (strain HaA2).